The chain runs to 593 residues: Aspartate--tRNA ligase (593 aa).

Residue Glu173 coordinates L-aspartate. Residues 197–200 are aspartate; it reads QLFK. Arg219 provides a ligand contact to L-aspartate. Residues 219–221 and Gln228 contribute to the ATP site; that span reads RDE. His449 is a binding site for L-aspartate. An ATP-binding site is contributed by Glu483. Arg490 provides a ligand contact to L-aspartate. 535–538 lines the ATP pocket; it reads GLDR.

Belongs to the class-II aminoacyl-tRNA synthetase family. Type 1 subfamily. In terms of assembly, homodimer.

The protein localises to the cytoplasm. It catalyses the reaction tRNA(Asp) + L-aspartate + ATP = L-aspartyl-tRNA(Asp) + AMP + diphosphate. Functionally, catalyzes the attachment of L-aspartate to tRNA(Asp) in a two-step reaction: L-aspartate is first activated by ATP to form Asp-AMP and then transferred to the acceptor end of tRNA(Asp). The polypeptide is Aspartate--tRNA ligase (Shewanella piezotolerans (strain WP3 / JCM 13877)).